Consider the following 456-residue polypeptide: Gamma-aminobutyric acid receptor subunit alpha-1 (456 aa).

The N-terminal stretch at M1 to G27 is a signal peptide. At Q28–F253 the chain is on the extracellular side. The N-linked (GlcNAc...) asparagine glycan is linked to N38. R94 lines the 4-aminobutanoate pocket. A glycan (N-linked (GlcNAc...) asparagine) is linked at N138. T157 is a 4-aminobutanoate binding site. C166 and C180 are disulfide-bonded. Residues V254–L274 traverse the membrane as a helical segment. W273 lines the 3alpha-hydroxy-5alpha-pregnan-11,20-dione pocket. Topologically, residues N275–V279 are cytoplasmic. A helical membrane pass occupies residues P280–R301. The Extracellular portion of the chain corresponds to N302–T311. Residues A312 to T333 traverse the membrane as a helical segment. The Cytoplasmic portion of the chain corresponds to V334–R421. A helical membrane pass occupies residues L422–T441. The Extracellular portion of the chain corresponds to Y442 to Q456.

The protein belongs to the ligand-gated ion channel (TC 1.A.9) family. Gamma-aminobutyric acid receptor (TC 1.A.9.5) subfamily. GABRA1 sub-subfamily. Heteropentamer, formed by a combination of alpha (GABRA1-6), beta (GABRB1-3), gamma (GABRG1-3), delta (GABRD), epsilon (GABRE), rho (GABRR1-3), pi (GABRP) and theta (GABRQ) subunits, each subunit exhibiting distinct physiological and pharmacological properties. Interacts with UBQLN1. Interacts with TRAK1. Interacts with KIF21B. Identified in a complex of 720 kDa composed of LHFPL4, NLGN2, GABRA1, GABRB2, GABRG2 and GABRB3. Interacts with LHFPL4. Interacts with NLGN2. Interacts with SHISA7; interaction leads regulation of GABAAR trafficking, channel deactivation kinetics and pharmacology.

Its subcellular location is the postsynaptic cell membrane. The protein localises to the cell membrane. The protein resides in the cytoplasmic vesicle membrane. The catalysed reaction is chloride(in) = chloride(out). Allosterically activated by benzodiazepines and the anesthetic alphaxalone. Allosterically activated by pentobarbital. Inhibited by the antagonist bicuculline. Potentiated by histamine. Its function is as follows. Alpha subunit of the heteropentameric ligand-gated chloride channel gated by Gamma-aminobutyric acid (GABA), a major inhibitory neurotransmitter in the brain. GABA-gated chloride channels, also named GABA(A) receptors (GABAAR), consist of five subunits arranged around a central pore and contain GABA active binding site(s) located at the alpha and beta subunit interface(s). When activated by GABA, GABAARs selectively allow the flow of chloride anions across the cell membrane down their electrochemical gradient. Alpha-1/GABRA1-containing GABAARs are largely synaptic. Chloride influx into the postsynaptic neuron following GABAAR opening decreases the neuron ability to generate a new action potential, thereby reducing nerve transmission. GABAARs containing alpha-1 and beta-2 or -3 subunits exhibit synaptogenic activity; the gamma-2 subunit being necessary but not sufficient to induce rapid synaptic contacts formation. GABAARs function also as histamine receptor where histamine binds at the interface of two neighboring beta subunits and potentiates GABA response. GABAARs containing alpha, beta and epsilon subunits also permit spontaneous chloride channel activity while preserving the structural information required for GABA-gated openings. Alpha-1-mediated plasticity in the orbitofrontal cortex regulates context-dependent action selection. Together with rho subunits, may also control neuronal and glial GABAergic transmission in the cerebellum. This is Gamma-aminobutyric acid receptor subunit alpha-1 from Homo sapiens (Human).